A 320-amino-acid polypeptide reads, in one-letter code: Aspartate carbamoyltransferase catalytic subunit (320 aa).

2 residues coordinate carbamoyl phosphate: arginine 58 and threonine 59. Residue lysine 86 participates in L-aspartate binding. Residues arginine 108, histidine 136, and glutamine 139 each coordinate carbamoyl phosphate. Arginine 169 and arginine 223 together coordinate L-aspartate. Carbamoyl phosphate contacts are provided by glycine 264 and proline 265.

The protein belongs to the aspartate/ornithine carbamoyltransferase superfamily. ATCase family. As to quaternary structure, heterododecamer (2C3:3R2) of six catalytic PyrB chains organized as two trimers (C3), and six regulatory PyrI chains organized as three dimers (R2).

The enzyme catalyses carbamoyl phosphate + L-aspartate = N-carbamoyl-L-aspartate + phosphate + H(+). Its pathway is pyrimidine metabolism; UMP biosynthesis via de novo pathway; (S)-dihydroorotate from bicarbonate: step 2/3. Catalyzes the condensation of carbamoyl phosphate and aspartate to form carbamoyl aspartate and inorganic phosphate, the committed step in the de novo pyrimidine nucleotide biosynthesis pathway. This is Aspartate carbamoyltransferase catalytic subunit from Cereibacter sphaeroides (strain ATCC 17025 / ATH 2.4.3) (Rhodobacter sphaeroides).